The following is a 99-amino-acid chain: Large ribosomal subunit protein uL23 (99 aa).

Belongs to the universal ribosomal protein uL23 family. Part of the 50S ribosomal subunit. Contacts protein L29, and trigger factor when it is bound to the ribosome.

One of the early assembly proteins it binds 23S rRNA. One of the proteins that surrounds the polypeptide exit tunnel on the outside of the ribosome. Forms the main docking site for trigger factor binding to the ribosome. The sequence is that of Large ribosomal subunit protein uL23 from Oenococcus oeni (strain ATCC BAA-331 / PSU-1).